Reading from the N-terminus, the 79-residue chain is Eumenine mastoparan-OD (79 aa).

An N-terminal signal peptide occupies residues 1–24 (MKQTIVIVLLAAVAMMACLQMVAA). AXPX repeat units lie at residues 24-27 (AEPL), 30-33 (AAPA), 44-47 (ASPI), 52-55 (ANPE), and 58-61 (ASPE). The propeptide occupies 25–62 (EPLPEAAPAPSPLAEAEALASPIAEALANPEALASPEA). A Leucine amide modification is found at leucine 76.

As to expression, expressed by the venom gland.

The protein resides in the secreted. It is found in the target cell membrane. Its function is as follows. Antimicrobial peptide with strong activity against the fungi C.albicans (MIC=6 uM) and B.cinerea (MIC=10 uM), and weaker activity against the Gram-negative bacterium E.coli (MIC=97 uM) and Gram-positive bacterium S.aureus (MIC=97 uM). Shows cytolytic activity against insect cell lines. Has potent hemolytic activity against ovine erythrocytes (80% at 50 uM), but has no hemolytic activity against human erythrocytes. In vivo, peptide injection in the vicinity of the head and thorax of lepidopteran larvae induces feeding disorder that lasts one or two days before recovering. This is Eumenine mastoparan-OD from Orancistrocerus drewseni (Solitary wasp).